The chain runs to 95 residues: Co-chaperonin GroES (95 aa).

Belongs to the GroES chaperonin family. In terms of assembly, heptamer of 7 subunits arranged in a ring. Interacts with the chaperonin GroEL.

The protein localises to the cytoplasm. Its function is as follows. Together with the chaperonin GroEL, plays an essential role in assisting protein folding. The GroEL-GroES system forms a nano-cage that allows encapsulation of the non-native substrate proteins and provides a physical environment optimized to promote and accelerate protein folding. GroES binds to the apical surface of the GroEL ring, thereby capping the opening of the GroEL channel. In Cereibacter sphaeroides (strain ATCC 17025 / ATH 2.4.3) (Rhodobacter sphaeroides), this protein is Co-chaperonin GroES.